Here is a 1107-residue protein sequence, read N- to C-terminus: Phospholipid-transporting ATPase 2 (1107 aa).

Residues 1–33 (MKRFVYINDDEASKELCCDNRISNRKYTLWNFL) lie on the Cytoplasmic side of the membrane. Residues 34 to 55 (PKNLWEQFSRFMNQYFLLIACL) traverse the membrane as a helical segment. At 56–60 (QLWSL) the chain is on the extracellular side. The helical transmembrane segment at 61-83 (ITPVNPASTWGPLIFIFAVSASK) threads the bilayer. Residues 84-268 (EAWDDYHRYL…TAMDAMIDKL (185 aa)) are Cytoplasmic-facing. The chain crosses the membrane as a helical span at residues 269–290 (TGAIFVFQIVVVLVLGIAGNVW). Residues 291-315 (KDTEARKQWYVQYPEEAPWYELLVI) lie on the Extracellular side of the membrane. A helical transmembrane segment spans residues 316-333 (PLRFELLCSIMIPISIKV). The Cytoplasmic portion of the chain corresponds to 334 to 807 (SLDLVKGLYA…HGRYSYNRTA (474 aa)). Catalysis depends on Asp381, which acts as the 4-aspartylphosphate intermediate. The Mg(2+) site is built by Asp752 and Asp756. Residues 808–827 (FLSQYSFYKSLLICFIQIFF) form a helical membrane-spanning segment. The Extracellular portion of the chain corresponds to 828–841 (SFISGVSGTSLFNS). The chain crosses the membrane as a helical span at residues 842-860 (VSLMAYNVFYTSVPVLVSV). The Cytoplasmic segment spans residues 861–890 (IDKDLSEASVMQHPQILFYCQAGRLLNPST). The chain crosses the membrane as a helical span at residues 891–912 (FAGWFGRSLFHAIIVFVITIHA). Topologically, residues 913-919 (YAYEKSE) are extracellular. The chain crosses the membrane as a helical span at residues 920–942 (MEELGMVALSGCIWLQAFVVAQE). Residues 943-948 (TNSFTV) lie on the Cytoplasmic side of the membrane. A helical membrane pass occupies residues 949–969 (LQHLSIWGNLVGFYAINFLFS). The Extracellular segment spans residues 970-982 (AIPSSGMYTIMFR). A helical transmembrane segment spans residues 983–1007 (LCSQPSYWITMFLIVGAGMGPIFAL). The Cytoplasmic portion of the chain corresponds to 1008–1107 (KYFRYTYRPS…SGYTRNCKDN (100 aa)). Positions 1048–1075 (DLSPISITQPKNRSPVYEPLLSDSPNAT) are disordered. Residue Ser1050 is modified to Phosphoserine.

It belongs to the cation transport ATPase (P-type) (TC 3.A.3) family. Type IV subfamily. As to quaternary structure, interacts with ALIS1, ALIS3 and ALIS5 in a heterologous system.

It is found in the endoplasmic reticulum membrane. The protein localises to the prevacuolar compartment membrane. The catalysed reaction is ATP + H2O + phospholipidSide 1 = ADP + phosphate + phospholipidSide 2.. Functionally, involved in transport of phospholipids. Contributes to transmembrane flipping of lipids. Requires an interaction with a protein of the ALIS family for activity. Specific for phosphatidylserine and has no activity with lysolipid, phosphatidylcholine or phosphatidylethanolamine. This is Phospholipid-transporting ATPase 2 from Arabidopsis thaliana (Mouse-ear cress).